The primary structure comprises 190 residues: Histone-arginine methyltransferase METTL23 (190 aa).

This sequence belongs to the methyltransferase superfamily. METTL23 family. As to quaternary structure, interacts with HSPA5, HSP90B1, TUBULIN, UGGT1 and UGGT2. Interacts with TET3. Interacts with STPG4.

It is found in the nucleus. The protein localises to the cytoplasm. It carries out the reaction L-arginyl-[protein] + 2 S-adenosyl-L-methionine = N(omega),N(omega)-dimethyl-L-arginyl-[protein] + 2 S-adenosyl-L-homocysteine + 2 H(+). In terms of biological role, histone methyltransferase that dimethylates histone H3 at 'Arg-17', forming asymmetric dimethylarginine (H3R17me2a), leading to activate transcription via chromatin remodeling. Maternal factor involved in epigenetic chromatin reprogramming of the paternal genome in the zygote: mediates H3R17me2a, promoting histone H3.3 incorporation in the male pronucleus, leading to TET3 recruitment and subsequent DNA demethylation. The sequence is that of Histone-arginine methyltransferase METTL23 from Homo sapiens (Human).